A 530-amino-acid polypeptide reads, in one-letter code: Methionine--tRNA ligase (530 aa).

A 'HIGH' region motif is present at residues 18 to 28 (YYVNDVPHIGS). Positions 133, 136, 151, and 154 each coordinate Zn(2+). Positions 307-311 (KMGKS) match the 'KMSKS' region motif. Lys-310 provides a ligand contact to ATP.

This sequence belongs to the class-I aminoacyl-tRNA synthetase family. MetG type 2A subfamily. As to quaternary structure, monomer. The cofactor is Zn(2+).

It localises to the cytoplasm. It carries out the reaction tRNA(Met) + L-methionine + ATP = L-methionyl-tRNA(Met) + AMP + diphosphate. Functionally, is required not only for elongation of protein synthesis but also for the initiation of all mRNA translation through initiator tRNA(fMet) aminoacylation. The polypeptide is Methionine--tRNA ligase (Nostoc sp. (strain PCC 7120 / SAG 25.82 / UTEX 2576)).